The sequence spans 87 residues: Small ribosomal subunit protein bS18 (87 aa).

It belongs to the bacterial ribosomal protein bS18 family. In terms of assembly, part of the 30S ribosomal subunit. Forms a tight heterodimer with protein bS6.

In terms of biological role, binds as a heterodimer with protein bS6 to the central domain of the 16S rRNA, where it helps stabilize the platform of the 30S subunit. The protein is Small ribosomal subunit protein bS18 of Nitratidesulfovibrio vulgaris (strain DSM 19637 / Miyazaki F) (Desulfovibrio vulgaris).